The primary structure comprises 180 residues: Hypoxanthine-guanine phosphoribosyltransferase (180 aa).

Residues lysine 43 and glycine 44 each contribute to the diphosphate site. Positions 99 and 100 each coordinate Mg(2+). Residue aspartate 103 is the Proton acceptor of the active site. GMP contacts are provided by residues lysine 131, 152–153 (FI), and aspartate 159. A diphosphate-binding site is contributed by arginine 165.

It belongs to the purine/pyrimidine phosphoribosyltransferase family. The cofactor is Mg(2+).

It is found in the cytoplasm. It carries out the reaction IMP + diphosphate = hypoxanthine + 5-phospho-alpha-D-ribose 1-diphosphate. The enzyme catalyses GMP + diphosphate = guanine + 5-phospho-alpha-D-ribose 1-diphosphate. It functions in the pathway purine metabolism; IMP biosynthesis via salvage pathway; IMP from hypoxanthine: step 1/1. It participates in purine metabolism; GMP biosynthesis via salvage pathway; GMP from guanine: step 1/1. Its function is as follows. Purine salvage pathway enzyme that catalyzes the transfer of the ribosyl-5-phosphate group from 5-phospho-alpha-D-ribose 1-diphosphate (PRPP) to the N9 position of the 6-oxopurines hypoxanthine and guanine to form the corresponding ribonucleotides IMP (inosine 5'-monophosphate) and GMP (guanosine 5'-monophosphate), with the release of PPi. The protein is Hypoxanthine-guanine phosphoribosyltransferase (hpt) of Streptococcus agalactiae serotype III (strain NEM316).